An 85-amino-acid polypeptide reads, in one-letter code: UPF0297 protein LGAS_0422 (85 aa).

This sequence belongs to the UPF0297 family.

This is UPF0297 protein LGAS_0422 from Lactobacillus gasseri (strain ATCC 33323 / DSM 20243 / BCRC 14619 / CIP 102991 / JCM 1131 / KCTC 3163 / NCIMB 11718 / NCTC 13722 / AM63).